The following is a 938-amino-acid chain: Protein translocase subunit SecA 1 (938 aa).

Residues Q84, 102-106, and D491 each bind ATP; that span reads GEGKT. A disordered region spans residues 865-938; that stretch reads QTGGVATKER…QKTGRHAKRR (74 aa). Positions 918–927 are enriched in basic and acidic residues; that stretch reads TRKERREAAR.

This sequence belongs to the SecA family. In terms of assembly, monomer and homodimer. Part of the essential Sec protein translocation apparatus which comprises SecA, SecYEG and auxiliary proteins SecDF. Other proteins may also be involved.

The protein resides in the cell membrane. It is found in the cytoplasm. It carries out the reaction ATP + H2O + cellular proteinSide 1 = ADP + phosphate + cellular proteinSide 2.. Part of the Sec protein translocase complex. Interacts with the SecYEG preprotein conducting channel. Has a central role in coupling the hydrolysis of ATP to the transfer of proteins into and across the cell membrane, serving as an ATP-driven molecular motor driving the stepwise translocation of polypeptide chains across the membrane. The chain is Protein translocase subunit SecA 1 from Mycolicibacterium vanbaalenii (strain DSM 7251 / JCM 13017 / BCRC 16820 / KCTC 9966 / NRRL B-24157 / PYR-1) (Mycobacterium vanbaalenii).